Here is a 378-residue protein sequence, read N- to C-terminus: Ribosomal RNA large subunit methyltransferase G (378 aa).

It belongs to the methyltransferase superfamily. RlmG family.

The protein localises to the cytoplasm. The enzyme catalyses guanosine(1835) in 23S rRNA + S-adenosyl-L-methionine = N(2)-methylguanosine(1835) in 23S rRNA + S-adenosyl-L-homocysteine + H(+). In terms of biological role, specifically methylates the guanine in position 1835 (m2G1835) of 23S rRNA. The chain is Ribosomal RNA large subunit methyltransferase G from Salmonella heidelberg (strain SL476).